Reading from the N-terminus, the 369-residue chain is Mitogen-activated protein kinase 5 (369 aa).

Positions 36–322 constitute a Protein kinase domain; it reads QPPIMPIGRG…VEEALDHPYL (287 aa). Residues 42 to 50 and K65 contribute to the ATP site; that span reads IGRGAYGIV. D162 (proton acceptor) is an active-site residue. At T194 the chain carries Phosphothreonine. A TXY motif is present at residues 194 to 196; the sequence is TEY. Residue Y196 is modified to Phosphotyrosine.

This sequence belongs to the protein kinase superfamily. CMGC Ser/Thr protein kinase family. MAP kinase subfamily. In terms of assembly, interacts with MKK1. In terms of processing, dually phosphorylated on Thr-194 and Tyr-196, which activates the enzyme.

It catalyses the reaction L-seryl-[protein] + ATP = O-phospho-L-seryl-[protein] + ADP + H(+). It carries out the reaction L-threonyl-[protein] + ATP = O-phospho-L-threonyl-[protein] + ADP + H(+). With respect to regulation, activated by threonine and tyrosine phosphorylation. Involved in disease resistance and abiotic stress tolerance signaling pathways. The sequence is that of Mitogen-activated protein kinase 5 (MPK5) from Oryza sativa subsp. indica (Rice).